Reading from the N-terminus, the 463-residue chain is L-seryl-tRNA(Sec) selenium transferase (463 aa).

An N6-(pyridoxal phosphate)lysine modification is found at lysine 295.

The protein belongs to the SelA family. As to quaternary structure, homodecamer; pentamer of dimers. Binds only one seryl-tRNA(Sec) per dimer. Pyridoxal 5'-phosphate serves as cofactor.

The protein resides in the cytoplasm. It catalyses the reaction L-seryl-tRNA(Sec) + selenophosphate + H(+) = L-selenocysteinyl-tRNA(Sec) + phosphate. Its pathway is aminoacyl-tRNA biosynthesis; selenocysteinyl-tRNA(Sec) biosynthesis; selenocysteinyl-tRNA(Sec) from L-seryl-tRNA(Sec) (bacterial route): step 1/1. Converts seryl-tRNA(Sec) to selenocysteinyl-tRNA(Sec) required for selenoprotein biosynthesis. The protein is L-seryl-tRNA(Sec) selenium transferase of Escherichia coli O6:H1 (strain CFT073 / ATCC 700928 / UPEC).